The following is a 70-amino-acid chain: DNA-directed RNA polymerase subunit epsilon (70 aa).

Belongs to the RNA polymerase subunit epsilon family. In terms of assembly, RNAP is composed of a core of 2 alpha, a beta and a beta' subunit. The core is associated with a delta subunit, and at least one of epsilon or omega. When a sigma factor is associated with the core the holoenzyme is formed, which can initiate transcription.

It carries out the reaction RNA(n) + a ribonucleoside 5'-triphosphate = RNA(n+1) + diphosphate. Its function is as follows. A non-essential component of RNA polymerase (RNAP). The polypeptide is DNA-directed RNA polymerase subunit epsilon (Bacillus cereus (strain ATCC 14579 / DSM 31 / CCUG 7414 / JCM 2152 / NBRC 15305 / NCIMB 9373 / NCTC 2599 / NRRL B-3711)).